Here is a 210-residue protein sequence, read N- to C-terminus: Secreted effector protein SteA (210 aa).

Its subcellular location is the secreted. It localises to the host cytoplasm. Functionally, effector proteins function to alter host cell physiology and promote bacterial survival in host tissues. Could be required for passage of bacteria from the peritoneal cavity into the spleen, for survival and replication within host cells, or for avoiding host immune response. This chain is Secreted effector protein SteA (steA), found in Salmonella typhimurium (strain 14028s / SGSC 2262).